Reading from the N-terminus, the 310-residue chain is Fe-S cluster assembly protein dre2 (310 aa).

The tract at residues 1-130 (MSGRTLLLSP…KPDIEDMRAV (130 aa)) is N-terminal SAM-like domain. The interval 131–203 (PLRLGRKKHD…EDLLDGSELA (73 aa)) is linker. Positions 212, 223, 226, and 228 each coordinate [2Fe-2S] cluster. The segment at 212-228 (CRPKAGRRRRACKDCTC) is fe-S binding site A. Residues C273, C276, C284, and C287 each coordinate [4Fe-4S] cluster. Short sequence motifs (cx2C motif) lie at residues 273–276 (CGNC) and 284–287 (CEGC). Positions 273–287 (CGNCSLGDAFRCEGC) are fe-S binding site B.

This sequence belongs to the anamorsin family. Monomer. Interacts with tah18. Interacts with mia40. It depends on [2Fe-2S] cluster as a cofactor. The cofactor is [4Fe-4S] cluster.

It localises to the cytoplasm. Its subcellular location is the mitochondrion intermembrane space. Functionally, component of the cytosolic iron-sulfur (Fe-S) protein assembly (CIA) machinery required for the maturation of extramitochondrial Fe-S proteins. Part of an electron transfer chain functioning in an early step of cytosolic Fe-S biogenesis, facilitating the de novo assembly of a [4Fe-4S] cluster on the scaffold complex cfd1-nbp35. Electrons are transferred to dre2 from NADPH via the FAD- and FMN-containing protein tah18. Tah18-dre2 are also required for the assembly of the diferric tyrosyl radical cofactor of ribonucleotide reductase (RNR), probably by providing electrons for reduction during radical cofactor maturation in the catalytic small subunit rnr2. This chain is Fe-S cluster assembly protein dre2, found in Aspergillus clavatus (strain ATCC 1007 / CBS 513.65 / DSM 816 / NCTC 3887 / NRRL 1 / QM 1276 / 107).